The chain runs to 209 residues: Ribosomal RNA large subunit methyltransferase E (209 aa).

S-adenosyl-L-methionine contacts are provided by Gly-63, Trp-65, Asp-83, Asp-99, and Asp-124. Lys-164 functions as the Proton acceptor in the catalytic mechanism.

The protein belongs to the class I-like SAM-binding methyltransferase superfamily. RNA methyltransferase RlmE family.

The protein resides in the cytoplasm. It carries out the reaction uridine(2552) in 23S rRNA + S-adenosyl-L-methionine = 2'-O-methyluridine(2552) in 23S rRNA + S-adenosyl-L-homocysteine + H(+). In terms of biological role, specifically methylates the uridine in position 2552 of 23S rRNA at the 2'-O position of the ribose in the fully assembled 50S ribosomal subunit. The chain is Ribosomal RNA large subunit methyltransferase E from Photobacterium profundum (strain SS9).